The following is a 117-amino-acid chain: Putative membrane protein insertion efficiency factor (117 aa).

Positions 87-117 (RKGGPSAAEPAIEGHIPSSPAAETPSHVQGA) are disordered.

Belongs to the UPF0161 family.

The protein localises to the cell membrane. Functionally, could be involved in insertion of integral membrane proteins into the membrane. In Streptomyces avermitilis (strain ATCC 31267 / DSM 46492 / JCM 5070 / NBRC 14893 / NCIMB 12804 / NRRL 8165 / MA-4680), this protein is Putative membrane protein insertion efficiency factor.